The primary structure comprises 143 residues: NADH-quinone oxidoreductase subunit A (143 aa).

The next 3 helical transmembrane spans lie at 8–28 (FGNV…GYLT), 63–83 (FYVV…LYPW), and 93–113 (FALI…AYAW).

Belongs to the complex I subunit 3 family. As to quaternary structure, NDH-1 is composed of 14 different subunits. Subunits NuoA, H, J, K, L, M, N constitute the membrane sector of the complex.

It is found in the cell inner membrane. It catalyses the reaction a quinone + NADH + 5 H(+)(in) = a quinol + NAD(+) + 4 H(+)(out). Functionally, NDH-1 shuttles electrons from NADH, via FMN and iron-sulfur (Fe-S) centers, to quinones in the respiratory chain. The immediate electron acceptor for the enzyme in this species is believed to be a menaquinone. Couples the redox reaction to proton translocation (for every two electrons transferred, four hydrogen ions are translocated across the cytoplasmic membrane), and thus conserves the redox energy in a proton gradient. The polypeptide is NADH-quinone oxidoreductase subunit A (Pelodictyon phaeoclathratiforme (strain DSM 5477 / BU-1)).